We begin with the raw amino-acid sequence, 176 residues long: Oleosin Ara h 14.0103 (176 aa).

At Ala-2 the chain carries N-acetylalanine; alternate. 3 helical membrane-spanning segments follow: residues 50–70, 75–95, and 96–116; these read IIAVLVGVPTGGTLLLLSGLS, IIGLAIATPVFIFFSPVIVPA, and VVTIGLAVTGILTAGACGLTG. Residues 156 to 176 are disordered; sequence KTKDAGQEIQTKAQDVKRSSS.

The protein belongs to the oleosin family. In terms of tissue distribution, expressed in seeds (at protein level).

It is found in the lipid droplet. The protein resides in the membrane. In terms of biological role, may have a structural role to stabilize the lipid body during desiccation of the seed by preventing coalescence of the oil. Probably interacts with both lipid and phospholipid moieties of lipid bodies. May also provide recognition signals for specific lipase anchorage in lipolysis during seedling growth. This Arachis hypogaea (Peanut) protein is Oleosin Ara h 14.0103.